The following is a 166-amino-acid chain: Large ribosomal subunit protein uL10 (166 aa).

The protein belongs to the universal ribosomal protein uL10 family. Part of the ribosomal stalk of the 50S ribosomal subunit. The N-terminus interacts with L11 and the large rRNA to form the base of the stalk. The C-terminus forms an elongated spine to which L12 dimers bind in a sequential fashion forming a multimeric L10(L12)X complex.

In terms of biological role, forms part of the ribosomal stalk, playing a central role in the interaction of the ribosome with GTP-bound translation factors. The protein is Large ribosomal subunit protein uL10 of Hydrogenovibrio crunogenus (strain DSM 25203 / XCL-2) (Thiomicrospira crunogena).